A 143-amino-acid chain; its full sequence is Large ribosomal subunit protein uL13 (143 aa).

It belongs to the universal ribosomal protein uL13 family. As to quaternary structure, part of the 50S ribosomal subunit.

Its function is as follows. This protein is one of the early assembly proteins of the 50S ribosomal subunit, although it is not seen to bind rRNA by itself. It is important during the early stages of 50S assembly. The sequence is that of Large ribosomal subunit protein uL13 from Geobacter sulfurreducens (strain ATCC 51573 / DSM 12127 / PCA).